A 128-amino-acid chain; its full sequence is Azurin (128 aa).

Residues 1–128 (AECKTTIDST…SMMKGTVTLK (128 aa)) enclose the Plastocyanin-like domain. A disulfide bridge connects residues C3 and C26. Cu cation contacts are provided by H46, C112, H117, and M121.

It is found in the periplasm. Its function is as follows. Transfers electrons from cytochrome c551 to cytochrome oxidase. The polypeptide is Azurin (Pseudomonas fluorescens biotype B).